The sequence spans 138 residues: Basic phospholipase A2 RV-4 (138 aa).

Residues 1–16 (MRTLWIVAVCLIGVEG) form the signal peptide. 7 disulfide bridges follow: Cys42-Cys131, Cys44-Cys60, Cys59-Cys111, Cys65-Cys138, Cys66-Cys104, Cys73-Cys97, and Cys91-Cys102. Residues Tyr43, Gly45, and Gly47 each contribute to the Ca(2+) site. Residue His63 is part of the active site. Asp64 lines the Ca(2+) pocket. Residue Asp105 is part of the active site.

Belongs to the phospholipase A2 family. Group II subfamily. D49 sub-subfamily. Heterodimer of a weakly toxic basic protein having phospholipase A2 activity (RV-4) and a non-toxic acidic protein which inhibits its enzymatic activity but potentiates its lethal potency and neurotoxicity (RV-7). Requires Ca(2+) as cofactor. Expressed by the venom gland.

It is found in the secreted. The enzyme catalyses a 1,2-diacyl-sn-glycero-3-phosphocholine + H2O = a 1-acyl-sn-glycero-3-phosphocholine + a fatty acid + H(+). Heterodimer RV-4/RV-7: acts as a presynaptic neurotoxin. In terms of biological role, monomer: snake venom phospholipase A2 (PLA2) that acts as a presynaptic neurotoxin. PLA2 catalyzes the calcium-dependent hydrolysis of the 2-acyl groups in 3-sn-phosphoglycerides. The chain is Basic phospholipase A2 RV-4 from Daboia siamensis (Eastern Russel's viper).